The primary structure comprises 200 residues: Protein RISC-INTERACTING CLEARING 3'-5' EXORIBONUCLEASE 1 (200 aa).

Oligomerization stretches follow at residues Ser35–Trp66, Lys102–Arg127, and Asp166–Asp173.

The protein belongs to the RICE family. In terms of assembly, homohexamer with DnaQ-like exonuclease fold in a ring-shaped structure with a central cavity. Component of AGO1 and AGO10-centered RNA-induced silencing complexes (RISC). Interacts with and acts as a cofactor of AGO1 and AGO10. In terms of tissue distribution, ubiquitously expressed throughout development in germinating seeds, cotyledons, leaves and roots of young seedlings and adult plants, stems and inflorescence.

The protein localises to the cytoplasm. The enzyme catalyses Exonucleolytic cleavage in the 3'- to 5'-direction to yield nucleoside 5'-phosphates.. In terms of biological role, 3'-to-5' exoribonuclease (RNase) specifically targeting single-stranded RNAs. Triggers miRNA accumulation in RNA-induced silencing complex (RISC), composed of miRNAs and AGO proteins, by degrading uridylated cleavage fragments. Required during plant growth and development. The protein is Protein RISC-INTERACTING CLEARING 3'-5' EXORIBONUCLEASE 1 of Arabidopsis thaliana (Mouse-ear cress).